The chain runs to 565 residues: Glucose-6-phosphate isomerase (565 aa).

Residue glutamate 373 is the Proton donor of the active site. Residues histidine 404 and lysine 530 contribute to the active site.

This sequence belongs to the GPI family.

Its subcellular location is the cytoplasm. It catalyses the reaction alpha-D-glucose 6-phosphate = beta-D-fructose 6-phosphate. The protein operates within carbohydrate biosynthesis; gluconeogenesis. It functions in the pathway carbohydrate degradation; glycolysis; D-glyceraldehyde 3-phosphate and glycerone phosphate from D-glucose: step 2/4. In terms of biological role, catalyzes the reversible isomerization of glucose-6-phosphate to fructose-6-phosphate. In Corynebacterium jeikeium (strain K411), this protein is Glucose-6-phosphate isomerase.